The following is a 288-amino-acid chain: Phospholipid phosphatase 2 (288 aa).

Topologically, residues 1–4 (MQRR) are cytoplasmic. A helical transmembrane segment spans residues 5–25 (WVFVLLDVLCLLVASLPFAIL). Topologically, residues 26–51 (TLVNAPYKRGFYCGDDSIRYPYRPDT) are lumenal. Residues 52–72 (ITHGLMAGVTITATVILVSAG) traverse the membrane as a helical segment. The Cytoplasmic portion of the chain corresponds to 73–87 (EAYLVYTDRLYSRSD). Residues 88 to 108 (FNNYVAAVYKVLGTFLFGAAV) form a helical membrane-spanning segment. The Lumenal portion of the chain corresponds to 109–162 (SQSLTDLAKYMIGRLRPNFLAVCDPDWSRVNCSVYVQLEKVCRGNPADVTEARL). Positions 117–125 (KYMIGRLRP) are phosphatase sequence motif I. Asn-139 carries an N-linked (GlcNAc...) asparagine glycan. A helical membrane pass occupies residues 163-183 (SFYSGHSSFGMYCMVFLALYV). A phosphatase sequence motif II region spans residues 165 to 168 (YSGH). The active-site Proton donors is the His-168. Topologically, residues 184–196 (QARLCWKWARLLR) are cytoplasmic. The helical transmembrane segment at 197-217 (PTVQFFLVAFALYVGYTRVSD) threads the bilayer. The segment at 213 to 224 (TRVSDYKHHWSD) is phosphatase sequence motif III. Topologically, residues 218–226 (YKHHWSDVL) are lumenal. His-220 functions as the Nucleophile in the catalytic mechanism. Residues 227–247 (VGLLQGALVAALTVCYISDFF) traverse the membrane as a helical segment. Topologically, residues 248-288 (KARPPQHCLKEEELERKPSLSLTLTLGEADHNHYGYPHSSS) are cytoplasmic.

This sequence belongs to the PA-phosphatase related phosphoesterase family. As to quaternary structure, forms functional homodimers and homooligomers. Can also form heterooligomers with PLPP1 and PLPP3. N-glycosylated. In terms of tissue distribution, found mainly in brain, pancreas and placenta.

The protein resides in the membrane. It localises to the cell membrane. The protein localises to the early endosome membrane. It is found in the endoplasmic reticulum membrane. The enzyme catalyses a 1,2-diacyl-sn-glycero-3-phosphate + H2O = a 1,2-diacyl-sn-glycerol + phosphate. It carries out the reaction 1,2-dihexadecanoyl-sn-glycero-3-phosphate + H2O = 1,2-dihexadecanoyl-sn-glycerol + phosphate. It catalyses the reaction 1,2-di-(9Z-octadecenoyl)-sn-glycero-3-phosphate + H2O = 1,2-di-(9Z-octadecenoyl)-sn-glycerol + phosphate. The catalysed reaction is a monoacyl-sn-glycero-3-phosphate + H2O = a monoacylglycerol + phosphate. The enzyme catalyses (9Z)-octadecenoyl-sn-glycero-3-phosphate + H2O = (9Z-octadecenoyl)-glycerol + phosphate. It carries out the reaction sphing-4-enine 1-phosphate + H2O = sphing-4-enine + phosphate. It catalyses the reaction an N-acylsphing-4-enine 1-phosphate + H2O = an N-acylsphing-4-enine + phosphate. The catalysed reaction is N-(octanoyl)-sphing-4-enine-1-phosphate + H2O = N-octanoylsphing-4-enine + phosphate. The enzyme catalyses N-(9Z-octadecenoyl)-ethanolamine phosphate + H2O = N-(9Z-octadecenoyl) ethanolamine + phosphate. The protein operates within lipid metabolism; phospholipid metabolism. Its activity is regulated as follows. Magnesium-independent phospholipid phosphatase. Insensitive to N-ethylmaleimide. Inhibited by sphingosine, zinc ions and modestly by propanolol. In terms of biological role, magnesium-independent phospholipid phosphatase that catalyzes the dephosphorylation of a variety of glycerolipid and sphingolipid phosphate esters including phosphatidate/PA, lysophosphatidate/LPA, sphingosine 1-phosphate/S1P and ceramide 1-phosphate/C1P. Has no apparent extracellular phosphatase activity and therefore most probably acts intracellularly. Also acts on N-oleoyl ethanolamine phosphate/N-(9Z-octadecenoyl)-ethanolamine phosphate, a potential physiological compound. Through dephosphorylation of these bioactive lipid mediators produces new bioactive compounds and may regulate signal transduction in different cellular processes. Indirectly regulates, for instance, cell cycle G1/S phase transition through its phospholipid phosphatase activity. The chain is Phospholipid phosphatase 2 from Homo sapiens (Human).